Here is a 154-residue protein sequence, read N- to C-terminus: Plastocyanin, chloroplastic (154 aa).

Residues Met1–Ala57 constitute a chloroplast transit peptide. One can recognise a Plastocyanin-like domain in the interval Gln58–Asn154. 4 residues coordinate Cu cation: His94, Cys139, His142, and Met147.

It belongs to the plastocyanin family. Requires Cu(2+) as cofactor.

The protein localises to the plastid. It localises to the chloroplast thylakoid membrane. Participates in electron transfer between P700 and the cytochrome b6-f complex in photosystem I. The polypeptide is Plastocyanin, chloroplastic (PETE) (Oryza sativa subsp. indica (Rice)).